The primary structure comprises 353 residues: ATP-dependent kinase YFH7 (353 aa).

Position 31–39 (31–39 (GSPGSGKST)) interacts with ATP.

Belongs to the YFH7 family.

Its function is as follows. ATP-dependent kinase that could be involved in endoplasmic reticulum membrane assembly. This chain is ATP-dependent kinase YFH7 (YFH7), found in Saccharomyces cerevisiae (strain JAY291) (Baker's yeast).